Consider the following 193-residue polypeptide: dTTP/UTP pyrophosphatase (193 aa).

Asp-77 serves as the catalytic Proton acceptor.

It belongs to the Maf family. YhdE subfamily. A divalent metal cation serves as cofactor.

The protein resides in the cytoplasm. The catalysed reaction is dTTP + H2O = dTMP + diphosphate + H(+). It catalyses the reaction UTP + H2O = UMP + diphosphate + H(+). Nucleoside triphosphate pyrophosphatase that hydrolyzes dTTP and UTP. May have a dual role in cell division arrest and in preventing the incorporation of modified nucleotides into cellular nucleic acids. This is dTTP/UTP pyrophosphatase from Parabacteroides distasonis (strain ATCC 8503 / DSM 20701 / CIP 104284 / JCM 5825 / NCTC 11152).